Here is a 118-residue protein sequence, read N- to C-terminus: Fluoride-specific ion channel FluC 2 (118 aa).

4 helical membrane-spanning segments follow: residues 1–21 (MIEALLVATGGFFGAITRFAI), 33–53 (FPIATFLINITGAFLLGYIIG), 55–75 (GVTTGWQLLLGTGFMGAFTTF), and 93–113 (TFLLYLSATYIVGILFAFLGM). Residues G70 and T73 each coordinate Na(+).

It belongs to the fluoride channel Fluc/FEX (TC 1.A.43) family.

It is found in the cell membrane. It catalyses the reaction fluoride(in) = fluoride(out). Its activity is regulated as follows. Na(+) is not transported, but it plays an essential structural role and its presence is essential for fluoride channel function. Functionally, fluoride-specific ion channel. Important for reducing fluoride concentration in the cell, thus reducing its toxicity. In Bacillus thuringiensis subsp. konkukian (strain 97-27), this protein is Fluoride-specific ion channel FluC 2.